Consider the following 290-residue polypeptide: 33 kDa chaperonin (290 aa).

2 cysteine pairs are disulfide-bonded: cysteine 235–cysteine 237 and cysteine 268–cysteine 271.

It belongs to the HSP33 family. Post-translationally, under oxidizing conditions two disulfide bonds are formed involving the reactive cysteines. Under reducing conditions zinc is bound to the reactive cysteines and the protein is inactive.

The protein resides in the cytoplasm. Its function is as follows. Redox regulated molecular chaperone. Protects both thermally unfolding and oxidatively damaged proteins from irreversible aggregation. Plays an important role in the bacterial defense system toward oxidative stress. In Streptococcus pyogenes serotype M2 (strain MGAS10270), this protein is 33 kDa chaperonin.